The sequence spans 188 residues: PRA1 family protein 3 (188 aa).

Met-1 is modified (N-acetylmethionine). Residues 1 to 35 (MDVNIAPLRAWDDFFPGSDRFARPDFRDISKWNNR) are Cytoplasmic-facing. Transmembrane regions (helical) follow at residues 36-56 (VVSN…MMIS) and 57-77 (VVGF…VLVF). The Cytoplasmic segment spans residues 78–93 (TGFVWAAHNKDILRRL). Transmembrane regions (helical) follow at residues 94–114 (KKQY…FLIS) and 115–135 (MFGG…LMFI). The segment at 103 to 117 (MVVMLASYFLISMFG) is required for homodimer formation and heterodimer formation with ARL6IP1. Over 136-188 (HASLRLRNLKNKLENKIEGIGLKRTPMGIVLDALEQQEENISKFADYISKVNE) the chain is Cytoplasmic. Residues 136–188 (HASLRLRNLKNKLENKIEGIGLKRTPMGIVLDALEQQEENISKFADYISKVNE) form a targeting to endoplasmic reticulum membrane region.

It belongs to the PRA1 family. In terms of assembly, homodimer. Heterodimer with ARL6IP1. Forms multimers. Interacts with ARL6. Interacts with prenylated RAB1A and RAB3A. Interacts with SLC1A1/EAAC1. Interacts with RTN2 (via first transmembrane domain). Does not interact with VAMP1, VAMP2 or VAMP3.

It is found in the endoplasmic reticulum membrane. The protein localises to the cell membrane. The protein resides in the cytoplasm. Its subcellular location is the cytoskeleton. Its function is as follows. Regulates intracellular concentrations of taurine and glutamate. Negatively modulates SLC1A1/EAAC1 glutamate transport activity by decreasing its affinity for glutamate in a PKC activity-dependent manner. Plays a role in the retention of SLC1A1/EAAC1 in the endoplasmic reticulum. The chain is PRA1 family protein 3 (ARL6IP5) from Sus scrofa (Pig).